The primary structure comprises 224 residues: Ribose-5-phosphate isomerase A (224 aa).

Substrate-binding positions include 26–29 (TGST), 82–85 (DGAD), and 95–98 (KGGG). Glutamate 104 serves as the catalytic Proton acceptor. Lysine 122 is a binding site for substrate.

Belongs to the ribose 5-phosphate isomerase family. As to quaternary structure, homodimer.

It catalyses the reaction aldehydo-D-ribose 5-phosphate = D-ribulose 5-phosphate. It functions in the pathway carbohydrate degradation; pentose phosphate pathway; D-ribose 5-phosphate from D-ribulose 5-phosphate (non-oxidative stage): step 1/1. Its function is as follows. Catalyzes the reversible conversion of ribose-5-phosphate to ribulose 5-phosphate. In Lactococcus lactis subsp. cremoris (strain SK11), this protein is Ribose-5-phosphate isomerase A.